We begin with the raw amino-acid sequence, 1590 residues long: Pentafunctional AROM polypeptide (1590 aa).

Residues 1–387 (MGSTTFENPT…YEPKASVVED (387 aa)) are 3-dehydroquinate synthase. Residues 49–51 (DTN), 86–89 (ENSK), 117–119 (GGV), and aspartate 122 contribute to the NAD(+) site. Arginine 133 contacts 7-phospho-2-dehydro-3-deoxy-D-arabino-heptonate. 142-143 (TT) contributes to the NAD(+) binding site. Aspartate 149 and lysine 155 together coordinate 7-phospho-2-dehydro-3-deoxy-D-arabino-heptonate. NAD(+) is bound at residue lysine 164. Residue asparagine 165 participates in 7-phospho-2-dehydro-3-deoxy-D-arabino-heptonate binding. NAD(+) contacts are provided by residues 182–185 (FLET) and asparagine 193. Glutamate 197 is a Zn(2+) binding site. 7-phospho-2-dehydro-3-deoxy-D-arabino-heptonate is bound by residues 197–200 (EVVK) and lysine 253. Glutamate 263 functions as the Proton acceptor; for 3-dehydroquinate synthase activity in the catalytic mechanism. Residues 267 to 271 (RNILN) and histidine 274 each bind 7-phospho-2-dehydro-3-deoxy-D-arabino-heptonate. Histidine 274 lines the Zn(2+) pocket. The Proton acceptor; for 3-dehydroquinate synthase activity role is filled by histidine 278. 7-phospho-2-dehydro-3-deoxy-D-arabino-heptonate is bound by residues histidine 290 and lysine 359. Residue histidine 290 coordinates Zn(2+). Residues 400 to 841 (VRPSVPETLN…WDILSKSFQV (442 aa)) are EPSP synthase. The active-site For EPSP synthase activity is cysteine 823. Residues 863–1055 (DKSIFIIGMR…RNKPQSFFVS (193 aa)) form a shikimate kinase region. 870–877 (GMRGAGKT) contributes to the ATP binding site. Residues 1056–1276 (LTMPDISGAA…AAPGQLSAAE (221 aa)) form a 3-dehydroquinase region. The active-site Proton acceptor; for 3-dehydroquinate dehydratase activity is the histidine 1179. Lysine 1207 functions as the Schiff-base intermediate with substrate; for 3-dehydroquinate dehydratase activity in the catalytic mechanism. Residues 1289 to 1590 (PKSFYLFGTP…KMDKHPTFVC (302 aa)) are shikimate dehydrogenase.

It in the N-terminal section; belongs to the sugar phosphate cyclases superfamily. Dehydroquinate synthase family. In the 2nd section; belongs to the EPSP synthase family. The protein in the 3rd section; belongs to the shikimate kinase family. This sequence in the 4th section; belongs to the type-I 3-dehydroquinase family. It in the C-terminal section; belongs to the shikimate dehydrogenase family. In terms of assembly, homodimer. Requires Zn(2+) as cofactor.

The protein resides in the cytoplasm. The enzyme catalyses 7-phospho-2-dehydro-3-deoxy-D-arabino-heptonate = 3-dehydroquinate + phosphate. It carries out the reaction 3-dehydroquinate = 3-dehydroshikimate + H2O. It catalyses the reaction shikimate + NADP(+) = 3-dehydroshikimate + NADPH + H(+). The catalysed reaction is shikimate + ATP = 3-phosphoshikimate + ADP + H(+). The enzyme catalyses 3-phosphoshikimate + phosphoenolpyruvate = 5-O-(1-carboxyvinyl)-3-phosphoshikimate + phosphate. Its pathway is metabolic intermediate biosynthesis; chorismate biosynthesis; chorismate from D-erythrose 4-phosphate and phosphoenolpyruvate: step 2/7. It participates in metabolic intermediate biosynthesis; chorismate biosynthesis; chorismate from D-erythrose 4-phosphate and phosphoenolpyruvate: step 3/7. The protein operates within metabolic intermediate biosynthesis; chorismate biosynthesis; chorismate from D-erythrose 4-phosphate and phosphoenolpyruvate: step 4/7. It functions in the pathway metabolic intermediate biosynthesis; chorismate biosynthesis; chorismate from D-erythrose 4-phosphate and phosphoenolpyruvate: step 5/7. Its pathway is metabolic intermediate biosynthesis; chorismate biosynthesis; chorismate from D-erythrose 4-phosphate and phosphoenolpyruvate: step 6/7. In terms of biological role, the AROM polypeptide catalyzes 5 consecutive enzymatic reactions in prechorismate polyaromatic amino acid biosynthesis. This is Pentafunctional AROM polypeptide from Sclerotinia sclerotiorum (White mold).